Consider the following 144-residue polypeptide: Small ribosomal subunit protein uS11c (144 aa).

This sequence belongs to the universal ribosomal protein uS11 family. As to quaternary structure, part of the 30S ribosomal subunit.

Its subcellular location is the plastid. The protein resides in the chloroplast. The protein is Small ribosomal subunit protein uS11c of Oenothera biennis (German evening primrose).